The chain runs to 132 residues: Arsenate reductase 1 (132 aa).

Catalysis depends on nucleophile residues Cys10, Cys82, and Cys89. 2 disulfide bridges follow: Cys10/Cys82 and Cys82/Cys89.

This sequence belongs to the low molecular weight phosphotyrosine protein phosphatase family. Thioredoxin-coupled ArsC subfamily.

The protein resides in the cytoplasm. It catalyses the reaction arsenate + [thioredoxin]-dithiol + H(+) = arsenite + [thioredoxin]-disulfide + H2O. Its function is as follows. Catalyzes the reduction of arsenate [As(V)] to arsenite [As(III)]. The chain is Arsenate reductase 1 from Staphylococcus epidermidis (strain ATCC 35984 / DSM 28319 / BCRC 17069 / CCUG 31568 / BM 3577 / RP62A).